Here is a 322-residue protein sequence, read N- to C-terminus: SUMO-activating enzyme subunit 1A (322 aa).

At Met1 the chain carries N-acetylmethionine.

This sequence belongs to the ubiquitin-activating E1 family. In terms of assembly, heterodimer of SAE1A or SAE1B and SAE2. The complex binds SUMO proteins via SAE2.

It localises to the nucleus. It functions in the pathway protein modification; protein sumoylation. Its function is as follows. The dimeric enzyme acts as an E1 ligase for SUMO1 and SUMO2. It mediates ATP-dependent activation of SUMO proteins and formation of a thioester with a conserved cysteine residue on SAE2. Functionally redundant with its paralog SAE1B. The sequence is that of SUMO-activating enzyme subunit 1A (SAE1A) from Arabidopsis thaliana (Mouse-ear cress).